The primary structure comprises 126 residues: Large ribosomal subunit protein bL17 (126 aa).

The protein belongs to the bacterial ribosomal protein bL17 family. Part of the 50S ribosomal subunit. Contacts protein L32.

The chain is Large ribosomal subunit protein bL17 from Xylella fastidiosa (strain Temecula1 / ATCC 700964).